A 306-amino-acid chain; its full sequence is tRNA dimethylallyltransferase (306 aa).

Position 9 to 16 (9 to 16) interacts with ATP; the sequence is GPTGIGKT. 11 to 16 contributes to the substrate binding site; sequence TGIGKT. The segment at 34–37 is interaction with substrate tRNA; that stretch reads DSMQ.

This sequence belongs to the IPP transferase family. As to quaternary structure, monomer. Mg(2+) serves as cofactor.

The catalysed reaction is adenosine(37) in tRNA + dimethylallyl diphosphate = N(6)-dimethylallyladenosine(37) in tRNA + diphosphate. In terms of biological role, catalyzes the transfer of a dimethylallyl group onto the adenine at position 37 in tRNAs that read codons beginning with uridine, leading to the formation of N6-(dimethylallyl)adenosine (i(6)A). The sequence is that of tRNA dimethylallyltransferase from Lactobacillus johnsonii (strain CNCM I-12250 / La1 / NCC 533).